We begin with the raw amino-acid sequence, 616 residues long: Dihydroxy-acid dehydratase (616 aa).

A Mg(2+)-binding site is contributed by Asp-81. Residue Cys-122 coordinates [2Fe-2S] cluster. The Mg(2+) site is built by Asp-123 and Lys-124. N6-carboxylysine is present on Lys-124. Cys-196 contacts [2Fe-2S] cluster. Residue Glu-496 participates in Mg(2+) binding. Ser-522 (proton acceptor) is an active-site residue.

It belongs to the IlvD/Edd family. Homodimer. [2Fe-2S] cluster serves as cofactor. It depends on Mg(2+) as a cofactor.

The catalysed reaction is (2R)-2,3-dihydroxy-3-methylbutanoate = 3-methyl-2-oxobutanoate + H2O. It carries out the reaction (2R,3R)-2,3-dihydroxy-3-methylpentanoate = (S)-3-methyl-2-oxopentanoate + H2O. It functions in the pathway amino-acid biosynthesis; L-isoleucine biosynthesis; L-isoleucine from 2-oxobutanoate: step 3/4. The protein operates within amino-acid biosynthesis; L-valine biosynthesis; L-valine from pyruvate: step 3/4. Functionally, functions in the biosynthesis of branched-chain amino acids. Catalyzes the dehydration of (2R,3R)-2,3-dihydroxy-3-methylpentanoate (2,3-dihydroxy-3-methylvalerate) into 2-oxo-3-methylpentanoate (2-oxo-3-methylvalerate) and of (2R)-2,3-dihydroxy-3-methylbutanoate (2,3-dihydroxyisovalerate) into 2-oxo-3-methylbutanoate (2-oxoisovalerate), the penultimate precursor to L-isoleucine and L-valine, respectively. The polypeptide is Dihydroxy-acid dehydratase (Streptomyces griseus subsp. griseus (strain JCM 4626 / CBS 651.72 / NBRC 13350 / KCC S-0626 / ISP 5235)).